Consider the following 356-residue polypeptide: Phospho-N-acetylmuramoyl-pentapeptide-transferase (356 aa).

10 consecutive transmembrane segments (helical) span residues 27 to 47, 73 to 93, 97 to 117, 134 to 154, 163 to 183, 195 to 215, 232 to 252, 258 to 278, 285 to 305, and 333 to 353; these read AAVATAMILGLWIGPRFILML, TMGGLMILISLMISALLWMDL, FVWACLFVTAGFAVVGFLDDY, LLVEFLIAGVAVLLIVSRTGT, GIVIPLGPFYYVFAMVLIVGF, GLATFPVIIASLTFLVIVYLS, AGELAVFAAAIIGACLAFLWF, AVFMGDTGSLALGGALATIAV, VLVLVGGLFVVEALSVIIQVF, and TVVIRFWIVSIVLALAGLATL.

It belongs to the glycosyltransferase 4 family. MraY subfamily. Requires Mg(2+) as cofactor.

It is found in the cell inner membrane. It carries out the reaction UDP-N-acetyl-alpha-D-muramoyl-L-alanyl-gamma-D-glutamyl-meso-2,6-diaminopimeloyl-D-alanyl-D-alanine + di-trans,octa-cis-undecaprenyl phosphate = di-trans,octa-cis-undecaprenyl diphospho-N-acetyl-alpha-D-muramoyl-L-alanyl-D-glutamyl-meso-2,6-diaminopimeloyl-D-alanyl-D-alanine + UMP. Its pathway is cell wall biogenesis; peptidoglycan biosynthesis. In terms of biological role, catalyzes the initial step of the lipid cycle reactions in the biosynthesis of the cell wall peptidoglycan: transfers peptidoglycan precursor phospho-MurNAc-pentapeptide from UDP-MurNAc-pentapeptide onto the lipid carrier undecaprenyl phosphate, yielding undecaprenyl-pyrophosphoryl-MurNAc-pentapeptide, known as lipid I. The chain is Phospho-N-acetylmuramoyl-pentapeptide-transferase from Sphingopyxis alaskensis (strain DSM 13593 / LMG 18877 / RB2256) (Sphingomonas alaskensis).